The primary structure comprises 354 residues: Macrosialin (354 aa).

Residues 1–21 form the signal peptide; it reads MRLAVLFSGALLGLLAAQGTG. The Extracellular portion of the chain corresponds to 22–319; sequence NDCPHKKSAT…QSFSCPSDRS (298 aa). The mucin-like stretch occupies residues 23–140; the sequence is DCPHKKSATL…SPGFTSSAHP (118 aa). Low complexity predominate over residues 40–51; the sequence is PTVTESTGTTSH. Residues 40–162 are disordered; sequence PTVTESTGTT…SKETIGDYTW (123 aa). Residues 52–61 are compositionally biased toward basic residues; it reads RTTKSHKTTT. Over residues 62-84 the composition is skewed to low complexity; sequence HRTTTTGTTSHGPTTATHNPTTT. 2 tandem repeats follow at residues 70-99 and 100-129. A 2 X 30 AA tandem repeats region spans residues 70-129; it reads TSHGPTTATHNPTTTSHGNVTVHPTSNSTATSQGPSTATHSPATTSHGNATVHPTSNSTA. Residues 85–102 are compositionally biased toward polar residues; that stretch reads SHGNVTVHPTSNSTATSQ. N-linked (GlcNAc...) asparagine glycans are attached at residues N88 and N96. Positions 103–117 are enriched in low complexity; sequence GPSTATHSPATTSHG. 2 N-linked (GlcNAc...) asparagine glycosylation sites follow: N118 and N126. Polar residues predominate over residues 121 to 135; it reads VHPTSNSTATSPGFT. The span at 140-150 shows a compositional bias: pro residues; the sequence is PEPPPPSPSPS. N-linked (GlcNAc...) asparagine glycans are attached at residues N164, N199, N246, N261, and N279. A disulfide bridge links C169 with C207. A disulfide bridge links C277 with C314. Residues 320–344 form a helical membrane-spanning segment; the sequence is ILLPLIIGLILLGLLALVLIAFCII. Residues 345 to 354 lie on the Cytoplasmic side of the membrane; it reads RRRPSAYQAL.

Belongs to the LAMP family. N- and O-glycosylated. As to expression, highly expressed by blood monocytes and tissue macrophages. Also expressed in lymphocytes, fibroblasts and endothelial cells. Expressed in many tumor cell lines which could allow them to attach to selectins on vascular endothelium, facilitating their dissemination to secondary sites.

The protein localises to the cell membrane. It is found in the endosome membrane. It localises to the lysosome membrane. Could play a role in phagocytic activities of tissue macrophages, both in intracellular lysosomal metabolism and extracellular cell-cell and cell-pathogen interactions. Binds to tissue- and organ-specific lectins or selectins, allowing homing of macrophage subsets to particular sites. Rapid recirculation of CD68 from endosomes and lysosomes to the plasma membrane may allow macrophages to crawl over selectin-bearing substrates or other cells. This chain is Macrosialin (CD68), found in Homo sapiens (Human).